The primary structure comprises 318 residues: Trans-prenyltransferase (318 aa).

Residues 1–21 (MLHLIYISIIVVLIIILISYT) traverse the membrane as a helical segment. 3 residues coordinate isopentenyl diphosphate: lysine 85, arginine 88, and histidine 122. Mg(2+) is bound by residues aspartate 129 and aspartate 135. Dimethylallyl diphosphate is bound at residue arginine 140. Arginine 141 lines the isopentenyl diphosphate pocket. Dimethylallyl diphosphate is bound by residues lysine 216, threonine 217, and glutamine 254.

It belongs to the FPP/GGPP synthase family. Asfivirus trans-prenyltransferase subfamily. The cofactor is Mg(2+).

The protein resides in the host endoplasmic reticulum. It localises to the host membrane. It catalyses the reaction isopentenyl diphosphate + dimethylallyl diphosphate = (2E)-geranyl diphosphate + diphosphate. The catalysed reaction is isopentenyl diphosphate + (2E)-geranyl diphosphate = (2E,6E)-farnesyl diphosphate + diphosphate. It carries out the reaction isopentenyl diphosphate + (2E,6E)-farnesyl diphosphate = (2E,6E,10E)-geranylgeranyl diphosphate + diphosphate. The enzyme catalyses isopentenyl diphosphate + (2E,6E,10E)-geranylgeranyl diphosphate = (2E,6E,10E,14E)-geranylfarnesyl diphosphate + diphosphate. It functions in the pathway isoprenoid biosynthesis; farnesyl diphosphate biosynthesis; farnesyl diphosphate from geranyl diphosphate and isopentenyl diphosphate: step 1/1. Its pathway is isoprenoid biosynthesis; geranyl diphosphate biosynthesis; geranyl diphosphate from dimethylallyl diphosphate and isopentenyl diphosphate: step 1/1. It participates in isoprenoid biosynthesis; geranylgeranyl diphosphate biosynthesis; geranylgeranyl diphosphate from farnesyl diphosphate and isopentenyl diphosphate: step 1/1. Trans-prenyltransferase that catalyzes the sequential condensation of isopentenyl diphosphate (IPP) with different allylic diphosphates, such as dimethylallyl diphosphate (DMAPP), geranyl diphosphate (GPP), farnesyl diphosphate (FPP) and geranylgeranyl diphosphate (GGPP), farnesyl diphosphate being the best allylic substrate. This Ornithodoros (relapsing fever ticks) protein is Trans-prenyltransferase.